A 256-amino-acid chain; its full sequence is Hydroxyacylglutathione hydrolase (256 aa).

Positions 53, 55, 57, 58, 111, 128, and 166 each coordinate Zn(2+).

The protein belongs to the metallo-beta-lactamase superfamily. Glyoxalase II family. As to quaternary structure, monomer. Requires Zn(2+) as cofactor.

The enzyme catalyses an S-(2-hydroxyacyl)glutathione + H2O = a 2-hydroxy carboxylate + glutathione + H(+). It functions in the pathway secondary metabolite metabolism; methylglyoxal degradation; (R)-lactate from methylglyoxal: step 2/2. Its function is as follows. Thiolesterase that catalyzes the hydrolysis of S-D-lactoyl-glutathione to form glutathione and D-lactic acid. The sequence is that of Hydroxyacylglutathione hydrolase from Thiobacillus denitrificans (strain ATCC 25259 / T1).